The chain runs to 143 residues: Nucleoside diphosphate kinase (143 aa).

Residues Lys-11, Phe-59, Arg-87, Thr-93, Arg-104, and Asn-114 each coordinate ATP. The active-site Pros-phosphohistidine intermediate is the His-117.

This sequence belongs to the NDK family. As to quaternary structure, homotetramer. Requires Mg(2+) as cofactor.

It is found in the cytoplasm. It catalyses the reaction dZDP + ATP = dZTP + ADP. It carries out the reaction a 2'-deoxyribonucleoside 5'-diphosphate + ATP = a 2'-deoxyribonucleoside 5'-triphosphate + ADP. The catalysed reaction is a ribonucleoside 5'-diphosphate + ATP = a ribonucleoside 5'-triphosphate + ADP. Its pathway is purine metabolism. In terms of biological role, major role in the synthesis of nucleoside triphosphates other than ATP. The ATP gamma phosphate is transferred to the NDP beta phosphate via a ping-pong mechanism, using a phosphorylated active-site intermediate. (Microbial infection) Catalyzes the phosphorylation of dZDP to dZTP, when the bacterium is infected by a phage that produces the substrate for the synthesis of dZTP (2- amino-2'-deoxyadenosine 5'-triphosphate), which is then used by the phage as a DNA polymerase substrate. The protein is Nucleoside diphosphate kinase of Acinetobacter baumannii (strain AB307-0294).